The following is a 686-amino-acid chain: Antigen peptide transporter 2 (686 aa).

Topologically, residues 1–6 are lumenal; sequence MRLPDL. Residues 7–27 form a helical membrane-spanning segment; sequence RPWTSLLLVDAALLWLLQGPL. At 28–56 the chain is on the cytoplasmic side; that stretch reads GTLLPQGLPGLWLEGTLRLGGLWGLLKLR. Residues 57–77 form a helical membrane-spanning segment; sequence GLLGFVGTLLLPLCLATPLTV. Residues 78-98 lie on the Lumenal side of the membrane; sequence SLRALVAGASRAPPARVASAP. The helical transmembrane segment at 99–119 threads the bilayer; sequence WSWLLVGYGAAGLSWSLWAVL. Over 120–148 the chain is Cytoplasmic; that stretch reads SPPGAQEKEQDQVNNKVLMWRLLKLSRPD. A helical transmembrane segment spans residues 149–169; it reads LPLLVAAFFFLVLAVLGETLI. One can recognise an ABC transmembrane type-1 domain in the interval 152–435; sequence LVAAFFFLVL…LVYIYGDMLS (284 aa). Residues 170–187 are Lumenal-facing; sequence PHYSGRVIDILGGDFDPH. Residues 188 to 208 form a helical membrane-spanning segment; the sequence is AFASAIFFMCLFSFGSSLSAG. Topologically, residues 209 to 266 are cytoplasmic; sequence CRGGCFTYTMSRINLRIREQLFSSLLRQDLGFFQETKTGELNSRLSSDTTLMSNWLPL. A helical membrane pass occupies residues 267-287; sequence NANVLLRSLVKVVGLYGFMLS. Topologically, residues 288–293 are lumenal; sequence ISPRLT. The helical transmembrane segment at 294–314 threads the bilayer; it reads LLSLLHMPFTIAAEKVYNTRH. The tract at residues 301 to 389 is part of the peptide-binding site; the sequence is PFTIAAEKVY…RRVLHLGVQM (89 aa). Topologically, residues 315-374 are cytoplasmic; the sequence is QEVLREIQDAVARAGQVVREAVGGLQTVRSFGAEEHEVCRYKEALEQCRQLYWRRDLERA. A helical membrane pass occupies residues 375–395; that stretch reads LYLLVRRVLHLGVQMLMLSCG. At 396–408 the chain is on the lumenal side; sequence LQQMQDGELTQGS. A helical transmembrane segment spans residues 409 to 429; the sequence is LLSFMIYQESVGSYVQTLVYI. Positions 414-433 are part of the peptide-binding site; it reads IYQESVGSYVQTLVYIYGDM. Residues 430–686 are Cytoplasmic-facing; that stretch reads YGDMLSNVGA…EGKLQKLAQL (257 aa). The ABC transporter domain maps to 468 to 686; that stretch reads VKFQDVSFAY…EGKLQKLAQL (219 aa). Position 503 to 510 (503 to 510) interacts with ATP; it reads GPNGSGKS.

It belongs to the ABC transporter superfamily. ABCB family. MHC peptide exporter (TC 3.A.1.209) subfamily. Heterodimer of TAP1 and TAP2 (TAP1-TAP2). A component of the peptide loading complex (PLC), interacts via TAPBP with MHCI heterodimer; this interaction mediates peptide-MHCI assembly. Recruits TAPBP in a 1:1 stoichiometry. Interacts with classical MHCI such as HLA-A*02-B2M; this interaction is obligatory for the loading of peptide epitopes. Interacts with non-classical MHCI molecules including HLA-E-B2M and HLA-F-B2M as well as PLC component CALR before the peptide loading. As to quaternary structure, (Microbial infection) Interacts with Epstein-Barr virus BLNF2a. In terms of assembly, (Microbial infection) Interacts with herpes simplex virus US12/ICP47. (Microbial infection) Interacts with adenovirus E3-19K glycoprotein, which binds TAP1-TAP2 and acts as a TAPBP inhibitor, preventing TAP1-TAP2 association with MHCI. Mg(2+) is required as a cofactor.

Its subcellular location is the endoplasmic reticulum membrane. It catalyses the reaction a peptide antigen(in) + ATP + H2O = a peptide antigen(out) + ADP + phosphate + H(+). Inhibited at high ER lumenal peptide concentrations. Its activity is regulated as follows. (Microbial infection) Inhibited by herpes simplex virus US12/ICP47 protein, which blocks the peptide-binding site of TAP1-TAP2. With respect to regulation, (Microbial infection) Inhibited by human cytomegalovirus US6 glycoprotein, which binds to the lumenal side of TAP1-TAP2 complex and inhibits peptide translocation by specifically blocking ATP-binding and preventing TAP1-TAP2 conformational rearrangement induced by peptide binding. In terms of biological role, ABC transporter associated with antigen processing. In complex with TAP1 mediates unidirectional translocation of peptide antigens from cytosol to endoplasmic reticulum (ER) for loading onto MHC class I (MHCI) molecules. Uses the chemical energy of ATP to export peptides against the concentration gradient. During the transport cycle alternates between 'inward-facing' state with peptide binding site facing the cytosol to 'outward-facing' state with peptide binding site facing the ER lumen. Peptide antigen binding to ATP-loaded TAP1-TAP2 induces a switch to hydrolysis-competent 'outward-facing' conformation ready for peptide loading onto nascent MHCI molecules. Subsequently ATP hydrolysis resets the transporter to the 'inward facing' state for a new cycle. Typically transports intracellular peptide antigens of 8 to 13 amino acids that arise from cytosolic proteolysis via IFNG-induced immunoproteasome. Binds peptides with free N- and C-termini, the first three and the C-terminal residues being critical. Preferentially selects peptides having a highly hydrophobic residue at position 3 and hydrophobic or charged residues at the C-terminal anchor. Proline at position 2 has the most destabilizing effect. As a component of the peptide loading complex (PLC), acts as a molecular scaffold essential for peptide-MHCI assembly and antigen presentation. The sequence is that of Antigen peptide transporter 2 from Homo sapiens (Human).